The sequence spans 155 residues: Small ribosomal subunit protein eS19 (155 aa).

Belongs to the eukaryotic ribosomal protein eS19 family. As to quaternary structure, component of the small ribosomal subunit.

It is found in the cytoplasm. Functionally, component of the small ribosomal subunit. The ribosome is a large ribonucleoprotein complex responsible for the synthesis of proteins in the cell. Required for proper maturation of the small (40S) ribosomal subunit. The polypeptide is Small ribosomal subunit protein eS19 (RPS19) (Entamoeba histolytica (strain ATCC 30459 / HM-1:IMSS / ABRM)).